Consider the following 203-residue polypeptide: Orotate phosphoribosyltransferase (203 aa).

Residues arginine 94, lysine 98, histidine 100, and glutamate 120–serine 128 contribute to the 5-phospho-alpha-D-ribose 1-diphosphate site. Serine 124 is an orotate binding site.

This sequence belongs to the purine/pyrimidine phosphoribosyltransferase family. PyrE subfamily. In terms of assembly, homodimer. Mg(2+) is required as a cofactor.

The enzyme catalyses orotidine 5'-phosphate + diphosphate = orotate + 5-phospho-alpha-D-ribose 1-diphosphate. It functions in the pathway pyrimidine metabolism; UMP biosynthesis via de novo pathway; UMP from orotate: step 1/2. Catalyzes the transfer of a ribosyl phosphate group from 5-phosphoribose 1-diphosphate to orotate, leading to the formation of orotidine monophosphate (OMP). In Staphylococcus aureus (strain MSSA476), this protein is Orotate phosphoribosyltransferase.